Consider the following 196-residue polypeptide: C-type lectin domain family 2 member F (196 aa).

Residues 1–21 are disordered; it reads MNAQCLKKPEEGESSPGTGDK. Over 1–41 the chain is Cytoplasmic; that stretch reads MNAQCLKKPEEGESSPGTGDKILQRNSLRAISPESSAKLYC. Residues 42 to 62 form a helical; Signal-anchor for type II membrane protein membrane-spanning segment; it reads CCGVIMVLTVAVVALSVALPA. Over 63 to 196 the chain is Extracellular; sequence TKTEQILINK…SRSSNYMLQC (134 aa). Cys77 and Cys88 are disulfide-bonded. Residues 84–187 enclose the C-type lectin domain; the sequence is VGNKCFYFSE…DYIPRKWICS (104 aa). Residue Asn97 is glycosylated (N-linked (GlcNAc...) asparagine). A disulfide bond links Cys105 and Cys186.

Its subcellular location is the cell membrane. Lectin-type cell surface receptor. The protein is C-type lectin domain family 2 member F (Clec2f) of Mus musculus (Mouse).